A 982-amino-acid chain; its full sequence is E3 ubiquitin-protein ligase CBL-B (982 aa).

Residues 35–167 (PPKQAAADRR…KAIFPNGQFQ (133 aa)) form a 4H region. A Cbl-PTB domain is found at 35-343 (PPKQAAADRR…GRSYNPDLTG (309 aa)). The segment at 168–240 (GDNFRITKAD…FEFDIFTRLF (73 aa)) is EF-hand-like. Ca(2+) is bound by residues D221, T223, N225, Y227, and E232. The interval 241–343 (QPWGSILRNW…GRSYNPDLTG (103 aa)) is SH2-like. S282 carries the phosphoserine; by PKC/PRKCQ modification. R286 contributes to the 4-O-phospho-L-tyrosine binding site. Residues 344 to 372 (LCEPTPHDHIKVTQEQYELYCEMGSTFQL) are linker. Y363 is modified (phosphotyrosine). The RING-type zinc finger occupies 373-412 (CKICAENDKDVKIEPCGHLMCTSCLTAWQESDGQGCPFCR). The disordered stretch occupies residues 465–588 (ASVRKCTDRQ…SVPSRDQPMP (124 aa)). Residues 473–486 (RQNSPVTSPGSSPL) are compositionally biased toward polar residues. S476, S480, S484, S521, S525, and S529 each carry phosphoserine. The interaction with VAV1 stretch occupies residues 543 to 567 (PLPAPPPPLRDPPPPPERPPPIPPD). Residues 544 to 566 (LPAPPPPLRDPPPPPERPPPIPP) are compositionally biased toward pro residues. Phosphoserine is present on S633. Phosphotyrosine is present on residues Y664 and Y708. Disordered regions lie at residues 702–723 (EDDD…SQPS) and 745–929 (THGA…EAAL). The segment covering 714–723 (HPVSLNSQPS) has biased composition (polar residues). Residues 819-828 (PSLPPPPPPA) are compositionally biased toward pro residues. Low complexity predominate over residues 838–848 (PPGSSSRPSSG). Positions 884–899 (RASQDYDQLPSSSDGS) are enriched in polar residues. Position 889 is a phosphotyrosine (Y889). The interaction with SH3KBP1 stretch occupies residues 891-927 (QLPSSSDGSQAPARPPKPRPRRTAPEIHHRKPHGPEA). The span at 906–922 (PKPRPRRTAPEIHHRKP) shows a compositional bias: basic residues. One can recognise a UBA domain in the interval 931–970 (NVDAKIAKLMGEGYAFEEVKRALEIAQNNVEVARSILREF).

In terms of assembly, interacts with SH3 domain-containing proteins LCK, CRK and SORBS1. Interacts with LCP2 and ZAP70. Interacts with CBL. Interacts with SH3 domain-containing proteins VAV1, FYN, FGR, PLCG1, GRB2, CRKL, PIK3R1 and SH3KBP1/CIN85. Identified in heterotrimeric complexes with SH3KBP1/CIN85, CD2AP and ARHGEF7, where one CBLB peptide binds two copies of the other protein. Interacts with poly-ubiquitinated proteins. Dimerization is required for the binding of poly-ubiquitin, but not for the binding of mono-ubiquitin. Interacts with EGFR (phosphorylated). Interacts with IFT20. In terms of processing, phosphorylated on tyrosine and serine residues upon TCR or BCR activation. Phosphorylated on Tyr-664 and Tyr-708 in adipocytes following insulin stimulation. Post-translationally, auto-ubiquitinated upon EGF-mediated cell activation or upon T-cell costimulation by CD28; which promotes proteasomal degradation.

It localises to the cytoplasm. It carries out the reaction S-ubiquitinyl-[E2 ubiquitin-conjugating enzyme]-L-cysteine + [acceptor protein]-L-lysine = [E2 ubiquitin-conjugating enzyme]-L-cysteine + N(6)-ubiquitinyl-[acceptor protein]-L-lysine.. It participates in protein modification; protein ubiquitination. Its function is as follows. E3 ubiquitin-protein ligase which accepts ubiquitin from specific E2 ubiquitin-conjugating enzymes, and transfers it to substrates, generally promoting their degradation by the proteasome. Negatively regulates TCR (T-cell receptor), BCR (B-cell receptor) and FCER1 (high affinity immunoglobulin epsilon receptor) signal transduction pathways. In naive T-cells, inhibits VAV1 activation upon TCR engagement and imposes a requirement for CD28 costimulation for proliferation and IL-2 production. Also acts by promoting PIK3R1/p85 ubiquitination, which impairs its recruitment to the TCR and subsequent activation. In activated T-cells, inhibits PLCG1 activation and calcium mobilization upon restimulation and promotes anergy. In B-cells, acts by ubiquitinating SYK and promoting its proteasomal degradation. Slightly promotes SRC ubiquitination. May be involved in EGFR ubiquitination and internalization. May be functionally coupled with the E2 ubiquitin-protein ligase UB2D3. In association with CBL, required for proper feedback inhibition of ciliary platelet-derived growth factor receptor-alpha (PDGFRA) signaling pathway via ubiquitination and internalization of PDGFRA. The protein is E3 ubiquitin-protein ligase CBL-B (Cblb) of Mus musculus (Mouse).